A 215-amino-acid polypeptide reads, in one-letter code: Chaperone protein TorD (215 aa).

This sequence belongs to the TorD/DmsD family. TorD subfamily.

It localises to the cytoplasm. Its function is as follows. Involved in the biogenesis of TorA. Acts on TorA before the insertion of the molybdenum cofactor and, as a result, probably favors a conformation of the apoenzyme that is competent for acquiring the cofactor. This chain is Chaperone protein TorD, found in Aliivibrio fischeri (strain ATCC 700601 / ES114) (Vibrio fischeri).